Here is a 212-residue protein sequence, read N- to C-terminus: Uridine kinase (212 aa).

13 to 20 is a binding site for ATP; sequence GASASGKS.

It belongs to the uridine kinase family.

Its subcellular location is the cytoplasm. The enzyme catalyses uridine + ATP = UMP + ADP + H(+). It catalyses the reaction cytidine + ATP = CMP + ADP + H(+). Its pathway is pyrimidine metabolism; CTP biosynthesis via salvage pathway; CTP from cytidine: step 1/3. It functions in the pathway pyrimidine metabolism; UMP biosynthesis via salvage pathway; UMP from uridine: step 1/1. The sequence is that of Uridine kinase from Shewanella baltica (strain OS223).